The following is a 750-amino-acid chain: Retron Eco8 OLD nuclease (750 aa).

The segment at 1–173 (MTIESIRVKN…IDLYDWNPIW (173 aa)) is ATPase domain N-terminus. 33–37 (NVGKS) contributes to the ATP binding site. A dimerization domain region spans residues 174–260 (KLISNLNSFN…TQSDGTNSNK (87 aa)). The interval 261 to 390 (FLETLLHLLI…FSDNEARLFF (130 aa)) is ATPase domain C-terminus. The segment at 391-704 (SEYIVFVEGA…SGWVTTFLNY (314 aa)) is toprim domain. Residues Glu-398, Glu-402, Asp-450, Asp-452, Ser-623, and Glu-641 each contribute to the a divalent metal cation site.

It belongs to the class 1 OLD nuclease family. Homodimer. Requires a divalent metal cation as cofactor.

In terms of biological role, probable nuclease member of antiviral defense system retron Eco8, composed of an reverse transcriptase (RT), this nuclease and a non-coding RNA (ncRNA) encoded between them. Expression of retron Eco8 confers protection against bacteriophages T4, T6, T7 and SECphi4, SECphi6 and SECphi18. At multiplicity of infection (MOI) of 0.02 cultures slow growth when infected with SECphi4 but do not collapse, at MOI 2 cultures collapse. When the retron is cloned in another E.coli strain synthesizes msDNA (a branched RNA linked by a 2',5'-phosphodiester bond to a single-stranded DNA). The retron transcript serves as primer and template to the reaction, and codes for the RT. This Escherichia coli protein is Retron Eco8 OLD nuclease.